The primary structure comprises 101 residues: Small ribosomal subunit protein uS14 (101 aa).

Residues 1-10 show a composition bias toward basic and acidic residues; it reads MAKKSSIEKN. Positions 1–23 are disordered; it reads MAKKSSIEKNNRRKRMVKNAAPK.

This sequence belongs to the universal ribosomal protein uS14 family. In terms of assembly, part of the 30S ribosomal subunit. Contacts proteins S3 and S10.

Its function is as follows. Binds 16S rRNA, required for the assembly of 30S particles and may also be responsible for determining the conformation of the 16S rRNA at the A site. The protein is Small ribosomal subunit protein uS14 of Bradyrhizobium diazoefficiens (strain JCM 10833 / BCRC 13528 / IAM 13628 / NBRC 14792 / USDA 110).